The chain runs to 351 residues: Glycerol-1-phosphate dehydrogenase [NAD(P)+] (351 aa).

NAD(+)-binding positions include 97–101 and 119–122; these read GTVID and TSPS. D124 provides a ligand contact to substrate. NAD(+) is bound at residue S128. D171 lines the substrate pocket. Positions 171 and 251 each coordinate Zn(2+). H255 contacts substrate. H267 contacts Zn(2+).

Belongs to the glycerol-1-phosphate dehydrogenase family. In terms of assembly, homodimer. Zn(2+) is required as a cofactor.

It localises to the cytoplasm. It catalyses the reaction sn-glycerol 1-phosphate + NAD(+) = dihydroxyacetone phosphate + NADH + H(+). It carries out the reaction sn-glycerol 1-phosphate + NADP(+) = dihydroxyacetone phosphate + NADPH + H(+). Its pathway is membrane lipid metabolism; glycerophospholipid metabolism. Catalyzes the NAD(P)H-dependent reduction of dihydroxyacetonephosphate (DHAP or glycerone phosphate) to glycerol 1-phosphate (G1P). The G1P thus generated is used as the glycerophosphate backbone of phospholipids in the cellular membranes of Archaea. The protein is Glycerol-1-phosphate dehydrogenase [NAD(P)+] of Sulfolobus acidocaldarius (strain ATCC 33909 / DSM 639 / JCM 8929 / NBRC 15157 / NCIMB 11770).